The sequence spans 157 residues: MRLPRRVEDAAELRKNLKPLLEKRRRARINESLSQLKGLVLPLLGAETSRSSKLEKADILEMTVRFLQEQPATLYSSAAPGPLNSYLEGYRACLARLARVLPACSVLEPAVSARLLEHLRQRTVSDDSPSLTLPPAPAPAPSPPVPPPGSSGLWRPW.

Residues 13-70 (LRKNLKPLLEKRRRARINESLSQLKGLVLPLLGAETSRSSKLEKADILEMTVRFLQEQ) enclose the bHLH domain. Residues 86–119 (YLEGYRACLARLARVLPACSVLEPAVSARLLEHL) enclose the Orange domain. A disordered region spans residues 124–157 (VSDDSPSLTLPPAPAPAPSPPVPPPGSSGLWRPW). Residues 132–149 (TLPPAPAPAPSPPVPPPG) show a composition bias toward pro residues. Positions 154-157 (WRPW) match the WRPW motif motif.

Transcription repression requires formation of a complex with a corepressor protein of the Groucho/TLE family.

The protein localises to the nucleus. Its function is as follows. Transcriptional repressor of genes that require a bHLH protein for their transcription. This is Transcription factor HES-2 (Hes2) from Mus musculus (Mouse).